Here is a 311-residue protein sequence, read N- to C-terminus: Lipoyl synthase (311 aa).

[4Fe-4S] cluster contacts are provided by C47, C52, C58, C73, C77, C80, and S287. In terms of domain architecture, Radical SAM core spans 59-276 (WTKKHATVMI…AQIARAKGFL (218 aa)).

It belongs to the radical SAM superfamily. Lipoyl synthase family. Requires [4Fe-4S] cluster as cofactor.

The protein localises to the cytoplasm. The catalysed reaction is [[Fe-S] cluster scaffold protein carrying a second [4Fe-4S](2+) cluster] + N(6)-octanoyl-L-lysyl-[protein] + 2 oxidized [2Fe-2S]-[ferredoxin] + 2 S-adenosyl-L-methionine + 4 H(+) = [[Fe-S] cluster scaffold protein] + N(6)-[(R)-dihydrolipoyl]-L-lysyl-[protein] + 4 Fe(3+) + 2 hydrogen sulfide + 2 5'-deoxyadenosine + 2 L-methionine + 2 reduced [2Fe-2S]-[ferredoxin]. It functions in the pathway protein modification; protein lipoylation via endogenous pathway; protein N(6)-(lipoyl)lysine from octanoyl-[acyl-carrier-protein]: step 2/2. Functionally, catalyzes the radical-mediated insertion of two sulfur atoms into the C-6 and C-8 positions of the octanoyl moiety bound to the lipoyl domains of lipoate-dependent enzymes, thereby converting the octanoylated domains into lipoylated derivatives. The polypeptide is Lipoyl synthase (Sphingopyxis alaskensis (strain DSM 13593 / LMG 18877 / RB2256) (Sphingomonas alaskensis)).